The primary structure comprises 413 residues: 5'-deoxyadenosine deaminase (413 aa).

Histidine 57 and histidine 59 together coordinate Zn(2+). 2 residues coordinate substrate: glutamate 86 and histidine 171. Position 198 (histidine 198) interacts with Zn(2+). Residues glutamate 201 and aspartate 286 each contribute to the substrate site. Aspartate 286 lines the Zn(2+) pocket.

It belongs to the metallo-dependent hydrolases superfamily. MTA/SAH deaminase family. Homotetramer. Zn(2+) is required as a cofactor.

The catalysed reaction is 5'-deoxyadenosine + H2O + H(+) = 5'-deoxyinosine + NH4(+). It carries out the reaction S-adenosyl-L-homocysteine + H2O + H(+) = S-inosyl-L-homocysteine + NH4(+). The enzyme catalyses S-methyl-5'-thioadenosine + H2O + H(+) = S-methyl-5'-thioinosine + NH4(+). It catalyses the reaction adenosine + H2O + H(+) = inosine + NH4(+). Its pathway is amino-acid biosynthesis; S-adenosyl-L-methionine biosynthesis. In terms of biological role, catalyzes the deamination of three SAM-derived enzymatic products, namely 5'-deoxyadenosine, S-adenosyl-L-homocysteine, and 5'-methylthioadenosine, to produce the inosine analogs. Can also deaminate adenosine. The preferred substrate for this enzyme is 5'-deoxyadenosine, but all these substrates are efficiently deaminated. Likely functions in a S-adenosyl-L-methionine (SAM) recycling pathway from S-adenosyl-L-homocysteine (SAH) produced from SAM-dependent methylation reactions. May also be involved in the recycling of 5'-deoxyadenosine, whereupon the 5'-deoxyribose moiety of 5'-deoxyinosine is further metabolized to deoxyhexoses used for the biosynthesis of aromatic amino acids in methanogens. This Methanothrix thermoacetophila (strain DSM 6194 / JCM 14653 / NBRC 101360 / PT) (Methanosaeta thermophila) protein is 5'-deoxyadenosine deaminase.